The primary structure comprises 484 residues: Glycogen synthase (484 aa).

Lysine 15 serves as a coordination point for ADP-alpha-D-glucose.

It belongs to the glycosyltransferase 1 family. Bacterial/plant glycogen synthase subfamily.

The catalysed reaction is [(1-&gt;4)-alpha-D-glucosyl](n) + ADP-alpha-D-glucose = [(1-&gt;4)-alpha-D-glucosyl](n+1) + ADP + H(+). It functions in the pathway glycan biosynthesis; glycogen biosynthesis. In terms of biological role, synthesizes alpha-1,4-glucan chains using ADP-glucose. The polypeptide is Glycogen synthase (Anoxybacillus flavithermus (strain DSM 21510 / WK1)).